Reading from the N-terminus, the 172-residue chain is NADH-ubiquinone oxidoreductase chain 6 (172 aa).

4 helical membrane passes run 1–21 (MNNY…GLAL), 38–58 (VGCL…VFLI), 86–106 (WLIL…ICVL), and 147–167 (CATW…FIII).

It belongs to the complex I subunit 6 family. As to quaternary structure, core subunit of respiratory chain NADH dehydrogenase (Complex I) which is composed of 45 different subunits.

The protein localises to the mitochondrion inner membrane. It carries out the reaction a ubiquinone + NADH + 5 H(+)(in) = a ubiquinol + NAD(+) + 4 H(+)(out). Core subunit of the mitochondrial membrane respiratory chain NADH dehydrogenase (Complex I) which catalyzes electron transfer from NADH through the respiratory chain, using ubiquinone as an electron acceptor. Essential for the catalytic activity and assembly of complex I. This Mus musculus (Mouse) protein is NADH-ubiquinone oxidoreductase chain 6 (Mtnd6).